Consider the following 191-residue polypeptide: Large ribosomal subunit protein bL9 (191 aa).

The protein belongs to the bacterial ribosomal protein bL9 family.

Its function is as follows. Binds to the 23S rRNA. This chain is Large ribosomal subunit protein bL9, found in Granulibacter bethesdensis (strain ATCC BAA-1260 / CGDNIH1).